The primary structure comprises 62 residues: Neurotoxin 3 (62 aa).

The segment covering 1–16 (LECHDQQSSQTPTTTG) has biased composition (polar residues). The interval 1-22 (LECHDQQSSQTPTTTGCSGGET) is disordered. Disulfide bonds link Cys-3–Cys-24, Cys-17–Cys-41, Cys-43–Cys-54, and Cys-55–Cys-60.

The protein belongs to the three-finger toxin family. Short-chain subfamily. Type I alpha-neurotoxin sub-subfamily. Expressed by the venom gland.

The protein resides in the secreted. In terms of biological role, binds to muscle nicotinic acetylcholine receptor (nAChR) and inhibit acetylcholine from binding to the receptor, thereby impairing neuromuscular transmission. The polypeptide is Neurotoxin 3 (Naja sputatrix (Malayan spitting cobra)).